Here is a 517-residue protein sequence, read N- to C-terminus: L-amino-acid oxidase (517 aa).

A signal peptide spans 1-18; it reads MNVFFMFSLLFLAALESC. Cysteine 29 and cysteine 192 are joined by a disulfide. FAD-binding positions include 62-63, 82-83, arginine 90, and 106-109; these read MA, EA, and GPMR. Arginine 109 provides a ligand contact to substrate. A glycan (N-linked (GlcNAc...) asparagine) is linked at asparagine 191. Valine 280 lines the FAD pocket. Cysteine 350 and cysteine 431 are joined by a disulfide. Substrate is bound at residue tyrosine 391. Residues glutamate 476 and 483–488 each bind FAD; that span reads GWIDST. 483-484 contacts substrate; the sequence is GW.

It belongs to the flavin monoamine oxidase family. FIG1 subfamily. As to quaternary structure, homodimer; non-covalently linked. FAD is required as a cofactor. In terms of processing, N-glycosylated. As to expression, expressed by the venom gland.

The protein localises to the secreted. The catalysed reaction is an L-alpha-amino acid + O2 + H2O = a 2-oxocarboxylate + H2O2 + NH4(+). Functionally, catalyzes an oxidative deamination of predominantly hydrophobic and aromatic L-amino acids, thus producing hydrogen peroxide that may contribute to the diverse toxic effects of this enzyme. Exhibits diverse biological activities, such as hemorrhage, hemolysis, edema, apoptosis of vascular endothelial cells or tumor cell lines, antibacterial and antiparasitic activities, as well as regulation of platelet aggregation. Its effect on platelets is controversial, since it either induces aggregation or inhibits agonist-induced aggregation. These different effects are probably due to different experimental conditions. This chain is L-amino-acid oxidase, found in Demansia vestigiata (Lesser black whip snake).